A 288-amino-acid polypeptide reads, in one-letter code: Acetyl-coenzyme A carboxylase carboxyl transferase subunit beta (288 aa).

The region spanning 34–288 (LFAKCPACKH…HLVAFHGGGQ (255 aa)) is the CoA carboxyltransferase N-terminal domain. Zn(2+) contacts are provided by Cys-38, Cys-41, Cys-56, and Cys-59. A C4-type zinc finger spans residues 38–59 (CPACKHMIYKKDLGLAKICPTC).

Belongs to the AccD/PCCB family. Acetyl-CoA carboxylase is a heterohexamer composed of biotin carboxyl carrier protein (AccB), biotin carboxylase (AccC) and two subunits each of ACCase subunit alpha (AccA) and ACCase subunit beta (AccD). Zn(2+) serves as cofactor.

It localises to the cytoplasm. It catalyses the reaction N(6)-carboxybiotinyl-L-lysyl-[protein] + acetyl-CoA = N(6)-biotinyl-L-lysyl-[protein] + malonyl-CoA. It functions in the pathway lipid metabolism; malonyl-CoA biosynthesis; malonyl-CoA from acetyl-CoA: step 1/1. Component of the acetyl coenzyme A carboxylase (ACC) complex. Biotin carboxylase (BC) catalyzes the carboxylation of biotin on its carrier protein (BCCP) and then the CO(2) group is transferred by the transcarboxylase to acetyl-CoA to form malonyl-CoA. The chain is Acetyl-coenzyme A carboxylase carboxyl transferase subunit beta from Streptococcus pyogenes serotype M6 (strain ATCC BAA-946 / MGAS10394).